A 1036-amino-acid chain; its full sequence is Chitin synthase 1 (1036 aa).

The span at 1–10 shows a compositional bias: pro residues; sequence MDGPPSPTRV. Positions 1–153 are disordered; the sequence is MDGPPSPTRV…RRPLPPAPLF (153 aa). N-linked (GlcNAc...) asparagine glycosylation is present at asparagine 38. Low complexity predominate over residues 86–108; sequence PSIPLSSSNPRSPIRPSTPSRVS. N-linked (GlcNAc...) asparagine glycosylation is present at asparagine 179. Residues 189–229 form a disordered region; it reads RASLKSAHSYTTDSTFTEDDDITNEKLNHYGPAPEGRQDRR. Polar residues predominate over residues 194 to 203; it reads SAHSYTTDST. 7 helical membrane-spanning segments follow: residues 659 to 679, 699 to 719, 733 to 753, 776 to 796, 808 to 828, 908 to 928, and 945 to 967; these read FISL…FYFV, IFVI…ILSL, TMVT…YIVI, IFTN…LMSF, SAQY…YAFC, YVVA…SEAY, and WSVA…INIV. Residues 994–1019 form a disordered region; that stretch reads AGLGSGFSESGKTGITSGSGMSGMSL. Over residues 1001-1019 the composition is skewed to low complexity; it reads SESGKTGITSGSGMSGMSL.

Belongs to the chitin synthase family. Class II subfamily.

It localises to the cell membrane. It catalyses the reaction [(1-&gt;4)-N-acetyl-beta-D-glucosaminyl](n) + UDP-N-acetyl-alpha-D-glucosamine = [(1-&gt;4)-N-acetyl-beta-D-glucosaminyl](n+1) + UDP + H(+). Its function is as follows. Polymerizes chitin, a structural polymer of the cell wall and septum, by transferring the sugar moiety of UDP-GlcNAc to the non-reducing end of the growing chitin polymer. CHS1 mainly responsible for normal yeast cell reproductive growth. This is Chitin synthase 1 from Exophiala dermatitidis (strain ATCC 34100 / CBS 525.76 / NIH/UT8656) (Black yeast).